A 657-amino-acid chain; its full sequence is MRRAVCFPALCLLLNLHAAGCFSGNNDHFLAINQKKSGKPVFIYKHSQDIEKSLDIAPQKIYRHSYHSSSEAQVSKRHQIVNSAFPRPAYDPSLNLLAMDGQDLEVENLPIPAANVIVVTLQMDVNKLNITLLRIFRQGVAAALGLLPQQVHINRLIGKKNSIELFVSPINRKTGISDALPSEEVLRSLNINVLHQSLSQFGITEVSPEKNVLQGQHEADKIWSKEGFYAVVIFLSIFVIIVTCLMILYRLKERFQLSLRQDKEKNQEIHLSPITLQPALSEAKTVHSMVQPEQAPKVLNVVVDPQGRGAPEIKATTATSVCPSPFKMKPIGLQERRGSNVSLTLDMSSLGNIEPFVSIPTPREKVAMEYLQSASRILTRSQLRDVVASSHLLQSEFMEIPMNFVDPKEIDIPRHGTKNRYKTILPNPLSRVCLRPKNVTDSLSTYINANYIRGYSGKEKAFIATQGPMINTVDDFWQMVWQEDSPVIVMITKLKEKNEKCVLYWPEKRGIYGKVEVLVISVNECDNYTIRNLVLKQGSHTQHVKHYWYTSWPDHKTPDSAQPLLQLMLDVEEDRLASQGRGPVVVHCSAGIGRTGCFIATSIGCQQLKEEGVVDALSIVCQLRMDRGGMVQTSEQYEFVHHALCLYESRLSAETVQ.

The N-terminal stretch at 1–21 is a signal peptide; that stretch reads MRRAVCFPALCLLLNLHAAGC. Over 22–227 the chain is Extracellular; it reads FSGNNDHFLA…EADKIWSKEG (206 aa). Ser23 carries O-linked (Xyl...) (chondroitin sulfate) serine glycosylation. Residue Asn129 is glycosylated (N-linked (GlcNAc...) asparagine). Residues 228-248 traverse the membrane as a helical segment; sequence FYAVVIFLSIFVIIVTCLMIL. Residues 249–657 are Cytoplasmic-facing; sequence YRLKERFQLS…ESRLSAETVQ (409 aa). Phosphoserine is present on Ser272. Ser339 bears the Phosphoserine; by PKA mark. Residues 393–647 enclose the Tyrosine-protein phosphatase domain; the sequence is LQSEFMEIPM…EFVHHALCLY (255 aa). Residues Asp554, 588-594, and Gln632 each bind substrate; that span reads CSAGIGR. Cys588 functions as the Phosphocysteine intermediate in the catalytic mechanism.

The protein belongs to the protein-tyrosine phosphatase family. Receptor class 7 subfamily. In terms of assembly, interacts with MAPKs. Detected in cerebrospinal fluid (at protein level). Expressed in brain, placenta, small intestine, stomach, uterus and weakly in the prostate. Isoform alpha has been observed only in the brain. Isoform gamma is expressed in brain, placenta and uterus. Isoform delta is expressed in brain, kidney, placenta, prostate, small intestine and uterus.

Its subcellular location is the secreted. The protein resides in the cell membrane. The protein localises to the cytoplasm. It localises to the perinuclear region. The catalysed reaction is O-phospho-L-tyrosyl-[protein] + H2O = L-tyrosyl-[protein] + phosphate. Sequesters mitogen-activated protein kinases (MAPKs) such as MAPK1, MAPK3 and MAPK14 in the cytoplasm in an inactive form. The MAPKs bind to a dephosphorylated kinase interacting motif, phosphorylation of which by the protein kinase A complex releases the MAPKs for activation and translocation into the nucleus. This Homo sapiens (Human) protein is Receptor-type tyrosine-protein phosphatase R (PTPRR).